We begin with the raw amino-acid sequence, 500 residues long: MNSFPWLTIFVVLPISGGSLIFLFPHRGNKVIKWYTIFICIFELLLMTYAFSYYFQLDDPLIQLTEDYKWIQFFDFYWRLGIDGFSLGPILLTGFITTLATLAARPITRDSRLFHFLMLAMYSGQIGLFSSQDLLLFFIMWELELIPVYLLLSMWGGKKRLYSATKFILYTAGGSVFLLMGALGIALYGSNEPRFHFETSANQSYPVALEIFFYIGFLIAFAVKSPIIPLHTWLPDTHGEAHYSTCMLLAGILLKMGAYGLVRINMELLPHAHSIFSPWLIIVGVMQIIYAASTSPGQRNLKKRIAYSSVSHMGFIIIGICSISDMGLNGAILQIISHGFIGAALFFLAGTGYDRIRRVYLDEMGGMATSMPKIFTTFSILSLASLALPGMSGFFAELIVFFGIITGQKYLLMSKILITFVMAVGMILTPIYLLSMLRQMFYGYKLFNAPNSYFFDSGPRELFVSISILLPVIGIGFYPDFVFSLSVDRVEAILSNYFYR.

14 helical membrane-spanning segments follow: residues 4-24 (FPWLTIFVVLPISGGSLIFLF), 31-51 (VIKWYTIFICIFELLLMTYAF), 84-104 (GFSLGPILLTGFITTLATLAA), 111-129 (SRLFHFLMLAMYSGQIGLF), 134-154 (LLLFFIMWELELIPVYLLLSM), 167-187 (FILYTAGGSVFLLMGALGIAL), 208-228 (ALEIFFYIGFLIAFAVKSPII), 242-262 (HYSTCMLLAGILLKMGAYGLV), 272-292 (AHSIFSPWLIIVGVMQIIYAA), 305-325 (IAYSSVSHMGFIIIGICSISD), 330-350 (GAILQIISHGFIGAALFFLAG), 386-406 (LALPGMSGFFAELIVFFGIIT), 416-436 (ILITFVMAVGMILTPIYLLSM), and 463-483 (FVSISILLPVIGIGFYPDFVF).

Belongs to the complex I subunit 4 family.

Its subcellular location is the plastid. It is found in the chloroplast thylakoid membrane. It carries out the reaction a plastoquinone + NADH + (n+1) H(+)(in) = a plastoquinol + NAD(+) + n H(+)(out). It catalyses the reaction a plastoquinone + NADPH + (n+1) H(+)(in) = a plastoquinol + NADP(+) + n H(+)(out). The protein is NAD(P)H-quinone oxidoreductase chain 4, chloroplastic of Manihot esculenta (Cassava).